A 555-amino-acid polypeptide reads, in one-letter code: 3-oxocholest-4-en-26-oate--CoA ligase (555 aa).

Residues 172-180 (TGGTTGHPK), aspartate 418, arginine 433, and lysine 524 each bind ATP. Residues 525 to 555 (PDYRWAKDQTGLRPADEVYNNGDGNGAAATG) form a disordered region. Residues 544 to 555 (NNGDGNGAAATG) are compositionally biased toward low complexity.

This sequence belongs to the ATP-dependent AMP-binding enzyme family.

It catalyses the reaction (25S)-3-oxocholest-4-en-26-oate + ATP + CoA = (25S)-3-oxocholest-4-en-26-oyl-CoA + AMP + diphosphate. The protein operates within steroid metabolism; cholesterol metabolism. In terms of biological role, involved in the degradation of the side chains of C-24 branched-chain sterols. Catalyzes the ATP-dependent CoA thioesterification of the sterol 3-oxocholest-4-en-26-oate to yield 3-oxocholest-4-en-26-oyl-CoA. It can also use beta-sitosterol, campesterol and 3beta-hydroxy-5-cholesten-26-oate. This is 3-oxocholest-4-en-26-oate--CoA ligase from Rhodococcus rhodochrous.